Consider the following 347-residue polypeptide: D-alanine--D-alanine ligase (347 aa).

In terms of domain architecture, ATP-grasp spans 131–333 (KRVLESAGIA…YPKLIERLVD (203 aa)). Position 161-216 (161-216 (EEKLAYPVFTKPSNMGSSVGISKSENQEELRQALKLAFRYDSRVLVEQGVNAREIE)) interacts with ATP. 3 residues coordinate Mg(2+): D287, E300, and N302.

Belongs to the D-alanine--D-alanine ligase family. It depends on Mg(2+) as a cofactor. Mn(2+) serves as cofactor.

It is found in the cytoplasm. It carries out the reaction 2 D-alanine + ATP = D-alanyl-D-alanine + ADP + phosphate + H(+). It functions in the pathway cell wall biogenesis; peptidoglycan biosynthesis. Cell wall formation. This chain is D-alanine--D-alanine ligase, found in Streptococcus pneumoniae serotype 4 (strain ATCC BAA-334 / TIGR4).